Consider the following 216-residue polypeptide: MKQDTEMGEATNGYIGTPGTVPVSHAGNDSGMRRMRTASILMRLTAMALCVTALVTMVTDKQTHYFNFASTTIVKTAEYTNVLALKVFVYTNGVIAGYSLLQALWTIVAKSSYSTSKARLWTTFFLDQFIVYVLIGVTGAATEVAYIAEKGESDVAWPKQCNNFGRFCSQVGASVIVCFVAILTLVFLAVLSAKQLFIHERPSRTTRKDGYYTSNQ.

The segment at 1-30 (MKQDTEMGEATNGYIGTPGTVPVSHAGNDS) is disordered. Residues 1 to 37 (MKQDTEMGEATNGYIGTPGTVPVSHAGNDSGMRRMRT) are Cytoplasmic-facing. Residues 38–58 (ASILMRLTAMALCVTALVTMV) traverse the membrane as a helical segment. The Extracellular portion of the chain corresponds to 59-86 (TDKQTHYFNFASTTIVKTAEYTNVLALK). Residues 87–107 (VFVYTNGVIAGYSLLQALWTI) form a helical membrane-spanning segment. The Cytoplasmic segment spans residues 108–128 (VAKSSYSTSKARLWTTFFLDQ). Residues 129–148 (FIVYVLIGVTGAATEVAYIA) form a helical membrane-spanning segment. Residues 149 to 170 (EKGESDVAWPKQCNNFGRFCSQ) are Extracellular-facing. The chain crosses the membrane as a helical span at residues 171 to 191 (VGASVIVCFVAILTLVFLAVL). Residues 192 to 216 (SAKQLFIHERPSRTTRKDGYYTSNQ) are Cytoplasmic-facing.

This sequence belongs to the Casparian strip membrane proteins (CASP) family. Homodimer and heterodimers.

It is found in the cell membrane. The chain is CASP-like protein 2U1 from Marchantia polymorpha (Common liverwort).